Reading from the N-terminus, the 526-residue chain is Methyltetrahydroprotoberberine 14-monooxygenase (526 aa).

A helical transmembrane segment spans residues 14 to 34 (LLLQYLQPISVALVVIALVWN). Heme is bound at residue Cys-468.

The protein belongs to the cytochrome P450 family. Heme is required as a cofactor. Mainly expressed in roots, and barely in stems, leaves and carpels.

The protein resides in the membrane. It catalyses the reaction (S)-cis-N-methylcanadine + reduced [NADPH--hemoprotein reductase] + O2 = allocryptopine + oxidized [NADPH--hemoprotein reductase] + H2O + 2 H(+). It carries out the reaction (S)-cis-N-methylstylopine + reduced [NADPH--hemoprotein reductase] + O2 = protopine + oxidized [NADPH--hemoprotein reductase] + H2O + 2 H(+). The catalysed reaction is (S)-cis-N-methyltetrahydrothalifendine + reduced [NADPH--hemoprotein reductase] + O2 = 7-hydroxy-8-methoxy-11-methyl-17,19-dioxa-11-azatetracyclo[12.7.0.0(4,9).0(16,20)]henicosa-1(21),4(9),5,7,14,16(20)-hexaen-2-one + oxidized [NADPH--hemoprotein reductase] + H2O + 2 H(+). The enzyme catalyses (S)-cis-N-methyltetrahydropalmatine + reduced [NADPH--hemoprotein reductase] + O2 = muramine + oxidized [NADPH--hemoprotein reductase] + H2O + 2 H(+). The protein operates within alkaloid biosynthesis. With respect to regulation, repressed by cytochrome P450 inhibitors ketoconazole, metyrapone, prochloraz, ancymidol and cytochrome C. In terms of biological role, involved in the biosynthesis of the isoquinoline alkaloid sanguinarine. Catalyzes the conversion of N-methylated protoberberine alkaloids N-methylstylopine and N-methylcanadine into protopine and allocryptopine, respectively. Can also use (S)-cis-N-methyltetrahydrothalifendine and (S)-cis-N-methyltetrahydropalmatine as substrates. The polypeptide is Methyltetrahydroprotoberberine 14-monooxygenase (Papaver somniferum (Opium poppy)).